The sequence spans 189 residues: dCTP deaminase, dUMP-forming (189 aa).

Residues 101–106, Asp-119, 127–129, Gln-148, Tyr-162, Lys-170, and Gln-174 each bind dCTP; these read KSSLGR and TLE. The Proton donor/acceptor role is filled by Glu-129. Residues 163 to 189 are disordered; sequence GSGKLGSKYQGQRGPTPSKAYLNFPNK.

The protein belongs to the dCTP deaminase family. Homotrimer.

The catalysed reaction is dCTP + 2 H2O = dUMP + NH4(+) + diphosphate. The protein operates within pyrimidine metabolism; dUMP biosynthesis; dUMP from dCTP: step 1/1. Functionally, bifunctional enzyme that catalyzes both the deamination of dCTP to dUTP and the hydrolysis of dUTP to dUMP without releasing the toxic dUTP intermediate. The polypeptide is dCTP deaminase, dUMP-forming (Corynebacterium glutamicum (strain R)).